The chain runs to 175 residues: RNA pyrophosphohydrolase (175 aa).

The Nudix hydrolase domain maps to Gly-6 to Lys-149. Residues Gly-38–Gly-59 carry the Nudix box motif.

It belongs to the Nudix hydrolase family. RppH subfamily. A divalent metal cation is required as a cofactor.

Its function is as follows. Accelerates the degradation of transcripts by removing pyrophosphate from the 5'-end of triphosphorylated RNA, leading to a more labile monophosphorylated state that can stimulate subsequent ribonuclease cleavage. The protein is RNA pyrophosphohydrolase of Serratia proteamaculans (strain 568).